A 229-amino-acid polypeptide reads, in one-letter code: Heptaprenylglyceryl phosphate synthase (229 aa).

Sn-glycerol 1-phosphate is bound at residue Lys12. Mg(2+)-binding residues include Asp14 and Ser40. Residues 159–164 (YLEYSG), Gly189, and 209–210 (GN) each bind sn-glycerol 1-phosphate.

The protein belongs to the GGGP/HepGP synthase family. Group I subfamily. Homodimer. Mg(2+) is required as a cofactor.

The catalysed reaction is sn-glycerol 1-phosphate + all-trans-heptaprenyl diphosphate = 3-heptaprenyl-sn-glycero-1-phosphate + diphosphate. The protein operates within membrane lipid metabolism; glycerophospholipid metabolism. In terms of biological role, prenyltransferase that catalyzes in vivo the transfer of the heptaprenyl moiety of heptaprenyl pyrophosphate (HepPP; 35 carbon atoms) to the C3 hydroxyl of sn-glycerol-1-phosphate (G1P), producing heptaprenylglyceryl phosphate (HepGP). This reaction is an ether-bond-formation step in the biosynthesis of archaea-type G1P-based membrane lipids found in Bacillales. The sequence is that of Heptaprenylglyceryl phosphate synthase from Bacillus mycoides (strain KBAB4) (Bacillus weihenstephanensis).